The primary structure comprises 235 residues: 15,16-dihydrobiliverdin:ferredoxin oxidoreductase (235 aa).

The protein belongs to the HY2 family.

The enzyme catalyses 15,16-dihydrobiliverdin + oxidized 2[4Fe-4S]-[ferredoxin] = biliverdin IXalpha + reduced 2[4Fe-4S]-[ferredoxin] + 2 H(+). Its function is as follows. Catalyzes the two-electron reduction of biliverdin IX-alpha at the C15 methine bridge. In Synechococcus sp. (strain CC9902), this protein is 15,16-dihydrobiliverdin:ferredoxin oxidoreductase.